Here is a 496-residue protein sequence, read N- to C-terminus: Probable glycine betaine transporter (496 aa).

The next 12 helical transmembrane spans lie at 11–31, 49–69, 89–109, 136–156, 188–208, 219–239, 260–280, 306–326, 341–361, 396–416, 441–461, and 468–488; these read TVLY…VFLP, FGWL…GIAI, FQWF…FWSV, VVFF…GLAL, AIDI…LGLG, IWGI…ITVI, VWLS…VFIL, WVGG…PFVG, FVFA…AIYG, LYAI…VGAA, FWGI…GTAA, and ASIA…YSIL.

This sequence belongs to the BCCT transporter (TC 2.A.15) family.

The protein resides in the cell membrane. Its function is as follows. Probably acts in the uptake of glycine betaine. May function in the pathway that allows anaerobic methylotrophic growth of D.hafniense using glycine betaine. The protein is Probable glycine betaine transporter of Desulfitobacterium hafniense (strain Y51).